A 1305-amino-acid chain; its full sequence is Contactin-associated protein like 5-1 (1305 aa).

The signal sequence occupies residues 1–24 (MDSLQRLNGLLTLVLSALWHLGLT). The F5/8 type C domain occupies 25–174 (ASNYNCDDPL…IGMRVEAYGC (150 aa)). 2 Laminin G-like domains span residues 180-360 (VADF…TFSC) and 367-544 (PITF…IDLC). N-linked (GlcNAc...) asparagine glycosylation occurs at N282. C329 and C360 form a disulfide bridge. A glycan (N-linked (GlcNAc...) asparagine) is linked at N496. 3 disulfide bridges follow: C512–C544, C550–C561, and C555–C570. The 38-residue stretch at 546-583 (IKDRCLPNYCEHGGHCAQTWTTFYCNCSDTGYTGATCH) folds into the EGF-like 1 domain. N-linked (GlcNAc...) asparagine glycosylation is present at N571. A disulfide bond links C572 and C582. Residues 584–790 (DSIYEQSCEV…LRCNGDRHFW (207 aa)) form the Fibrinogen C-terminal domain. N-linked (GlcNAc...) asparagine glycosylation occurs at N622. A Laminin G-like 3 domain is found at 791–956 (NAVSFSTEAS…KLMSGVTPGC (166 aa)). Cystine bridges form between C929-C956, C960-C973, C967-C982, and C984-C994. The 39-residue stretch at 957–995 (PGHCSSYSSNCHNGGKCVEKQSGYSCDCTNSPNEGPFCQ) folds into the EGF-like 2 domain. The region spanning 1014–1198 (EPYLVIKNTS…VHGTLTESGC (185 aa)) is the Laminin G-like 4 domain. A glycan (N-linked (GlcNAc...) asparagine) is linked at N1057. C1163 and C1198 are oxidised to a cystine. A helical transmembrane segment spans residues 1238–1258 (VIGGIIAVVTFVTFCVIGIMI).

Belongs to the neurexin family.

It localises to the membrane. May play a role in the correct development and proper functioning of the peripheral and central nervous system and be involved in cell adhesion and intercellular communication. The polypeptide is Contactin-associated protein like 5-1 (Cntnap5a) (Rattus norvegicus (Rat)).